A 259-amino-acid polypeptide reads, in one-letter code: MSLKMKYNLGYLFDLLVVITNKDLKVRYKSSVFGYLWSIANPLLFAMIYYFIFKLVMRVQIPNYTLFLITGLFPWQWFASSATNSLFSFIANAQIIKKTVFPRSVIPLSNVMMEGLHFLCTIPVIIAFLFVYGMRPSLSWLWGIPIIAIGQVIFTFGISIIFSTLNLFFRDLERFVSLGIMLMFYCTPILYASDMIPEKFSWIITYNPLASMILSWRELFMNGVLNYEYISILYITGFILTIVGLAIFNKLKYRFAEIL.

6 helical membrane-spanning segments follow: residues 33–53 (FGYL…YFIF), 73–95 (FPWQ…NAQI), 111–131 (VMME…FLFV), 142–162 (WGIP…SIIF), 176–196 (VSLG…SDMI), and 228–248 (EYIS…LAIF). Positions 33-251 (FGYLWSIANP…IVGLAIFNKL (219 aa)) constitute an ABC transmembrane type-2 domain.

This sequence belongs to the ABC-2 integral membrane protein family.

The protein resides in the cell inner membrane. Its function is as follows. May form an ATP-driven O-antigen export apparatus, in association with RfbB. This Klebsiella pneumoniae protein is O-antigen export system permease protein RfbA (rfbA).